The chain runs to 150 residues: D-aminoacyl-tRNA deacylase (150 aa).

Positions 138 to 139 (GP) match the Gly-cisPro motif, important for rejection of L-amino acids motif.

Belongs to the DTD family. As to quaternary structure, homodimer.

The protein resides in the cytoplasm. It carries out the reaction glycyl-tRNA(Ala) + H2O = tRNA(Ala) + glycine + H(+). The catalysed reaction is a D-aminoacyl-tRNA + H2O = a tRNA + a D-alpha-amino acid + H(+). Functionally, an aminoacyl-tRNA editing enzyme that deacylates mischarged D-aminoacyl-tRNAs. Also deacylates mischarged glycyl-tRNA(Ala), protecting cells against glycine mischarging by AlaRS. Acts via tRNA-based rather than protein-based catalysis; rejects L-amino acids rather than detecting D-amino acids in the active site. By recycling D-aminoacyl-tRNA to D-amino acids and free tRNA molecules, this enzyme counteracts the toxicity associated with the formation of D-aminoacyl-tRNA entities in vivo and helps enforce protein L-homochirality. This is D-aminoacyl-tRNA deacylase from Bacteroides thetaiotaomicron (strain ATCC 29148 / DSM 2079 / JCM 5827 / CCUG 10774 / NCTC 10582 / VPI-5482 / E50).